A 194-amino-acid chain; its full sequence is ATP-dependent Clp protease proteolytic subunit (194 aa).

Serine 97 (nucleophile) is an active-site residue. The active site involves histidine 122.

Belongs to the peptidase S14 family. Fourteen ClpP subunits assemble into 2 heptameric rings which stack back to back to give a disk-like structure with a central cavity, resembling the structure of eukaryotic proteasomes.

It localises to the cytoplasm. It carries out the reaction Hydrolysis of proteins to small peptides in the presence of ATP and magnesium. alpha-casein is the usual test substrate. In the absence of ATP, only oligopeptides shorter than five residues are hydrolyzed (such as succinyl-Leu-Tyr-|-NHMec, and Leu-Tyr-Leu-|-Tyr-Trp, in which cleavage of the -Tyr-|-Leu- and -Tyr-|-Trp bonds also occurs).. Cleaves peptides in various proteins in a process that requires ATP hydrolysis. Has a chymotrypsin-like activity. Plays a major role in the degradation of misfolded proteins. The protein is ATP-dependent Clp protease proteolytic subunit of Lactobacillus delbrueckii subsp. bulgaricus (strain ATCC BAA-365 / Lb-18).